A 413-amino-acid chain; its full sequence is Large ribosomal subunit protein uL4 (413 aa).

Position 2 is an N-acetylalanine (alanine 2). Lysine 14 carries the post-translational modification N6-acetyllysine. Arginine 97 carries the post-translational modification Omega-N-methylarginine. At lysine 106 the chain carries N6-acetyllysine. Lysine 239 is covalently cross-linked (Glycyl lysine isopeptide (Lys-Gly) (interchain with G-Cter in SUMO2)). The residue at position 259 (lysine 259) is an N6-acetyllysine. Residue threonine 266 is modified to Phosphothreonine. 2 positions are modified to phosphoserine: serine 290 and serine 295. Residue arginine 300 is modified to Citrulline. Lysine 327 is covalently cross-linked (Glycyl lysine isopeptide (Lys-Gly) (interchain with G-Cter in SUMO2)). Lysine 333 carries the post-translational modification N6-acetyllysine. The disordered stretch occupies residues 355–413 (AAALAAKSDPKEAPAKKKPVVGKKKKPVVGRKAAAAKKPAADKKAADKRAGPEDKKPAA). An N6-acetyllysine; alternate modification is found at lysine 361. Lysine 361 participates in a covalent cross-link: Glycyl lysine isopeptide (Lys-Gly) (interchain with G-Cter in SUMO1); alternate. Serine 362 carries the post-translational modification Phosphoserine. A compositionally biased stretch (basic residues) spans 370–383 (KKKPVVGKKKKPVV). Residues 393–413 (PAADKKAADKRAGPEDKKPAA) show a composition bias toward basic and acidic residues.

This sequence belongs to the universal ribosomal protein uL4 family. Component of the large ribosomal subunit. May bind IPO9 with low affinity. Interacts with RBM3. Post-translationally, citrullinated by PADI4.

It is found in the cytoplasm. Its function is as follows. Component of the large ribosomal subunit. The ribosome is a large ribonucleoprotein complex responsible for the synthesis of proteins in the cell. In Oryctolagus cuniculus (Rabbit), this protein is Large ribosomal subunit protein uL4 (RPL4).